A 607-amino-acid chain; its full sequence is DNA mismatch repair protein MutL (607 aa).

The disordered stretch occupies residues 374 to 411 (RTEAGNEHVPSANRIQPPDPSIDMPDEPVPEQTDEPVA). Over residues 397–407 (MPDEPVPEQTD) the composition is skewed to acidic residues.

The protein belongs to the DNA mismatch repair MutL/HexB family.

This protein is involved in the repair of mismatches in DNA. It is required for dam-dependent methyl-directed DNA mismatch repair. May act as a 'molecular matchmaker', a protein that promotes the formation of a stable complex between two or more DNA-binding proteins in an ATP-dependent manner without itself being part of a final effector complex. The polypeptide is DNA mismatch repair protein MutL (Exiguobacterium sibiricum (strain DSM 17290 / CCUG 55495 / CIP 109462 / JCM 13490 / 255-15)).